Consider the following 335-residue polypeptide: Glycerol-3-phosphate dehydrogenase [NAD(P)+] (335 aa).

NADPH is bound by residues Ser12, Trp13, and Lys107. The sn-glycerol 3-phosphate site is built by Lys107, Gly138, and Ser140. Residue Ala142 participates in NADPH binding. Sn-glycerol 3-phosphate contacts are provided by Lys193, Asp246, Ser256, Arg257, and Asn258. Residue Lys193 is the Proton acceptor of the active site. NADPH is bound at residue Arg257. Positions 281 and 283 each coordinate NADPH.

The protein belongs to the NAD-dependent glycerol-3-phosphate dehydrogenase family.

Its subcellular location is the cytoplasm. It catalyses the reaction sn-glycerol 3-phosphate + NAD(+) = dihydroxyacetone phosphate + NADH + H(+). It carries out the reaction sn-glycerol 3-phosphate + NADP(+) = dihydroxyacetone phosphate + NADPH + H(+). Its pathway is membrane lipid metabolism; glycerophospholipid metabolism. Catalyzes the reduction of the glycolytic intermediate dihydroxyacetone phosphate (DHAP) to sn-glycerol 3-phosphate (G3P), the key precursor for phospholipid synthesis. The polypeptide is Glycerol-3-phosphate dehydrogenase [NAD(P)+] (Geobacter sulfurreducens (strain ATCC 51573 / DSM 12127 / PCA)).